The following is a 115-amino-acid chain: NADH-ubiquinone oxidoreductase chain 3 (115 aa).

3 consecutive transmembrane segments (helical) span residues 4 to 24, 55 to 75, and 87 to 107; these read LITMTVNSALSFCLISIAFWL, FFLVGITFLLFDLEIALLLPL, and TMMVSFMFVSILALGLAYEWL.

Belongs to the complex I subunit 3 family. In terms of assembly, core subunit of respiratory chain NADH dehydrogenase (Complex I) which is composed of 45 different subunits. Interacts with TMEM186. Interacts with TMEM242.

The protein resides in the mitochondrion inner membrane. It catalyses the reaction a ubiquinone + NADH + 5 H(+)(in) = a ubiquinol + NAD(+) + 4 H(+)(out). Functionally, core subunit of the mitochondrial membrane respiratory chain NADH dehydrogenase (Complex I) which catalyzes electron transfer from NADH through the respiratory chain, using ubiquinone as an electron acceptor. Essential for the catalytic activity of complex I. The protein is NADH-ubiquinone oxidoreductase chain 3 of Notiomys edwardsii (Edwards's long-clawed mouse).